The following is a 730-amino-acid chain: Polyphosphate kinase (730 aa).

The span at 1–21 shows a compositional bias: basic and acidic residues; the sequence is MMRHDRNVTEIDAETRPDENL. The segment at 1-39 is disordered; that stretch reads MMRHDRNVTEIDAETRPDENLWHSGDSAVGAPPAATPAA. N86 is an ATP binding site. The Mg(2+) site is built by R423 and R453. Catalysis depends on H483, which acts as the Phosphohistidine intermediate. Y516, R612, and H640 together coordinate ATP.

It belongs to the polyphosphate kinase 1 (PPK1) family. The cofactor is Mg(2+). Post-translationally, an intermediate of this reaction is the autophosphorylated ppk in which a phosphate is covalently linked to a histidine residue through a N-P bond.

It carries out the reaction [phosphate](n) + ATP = [phosphate](n+1) + ADP. Functionally, catalyzes the reversible transfer of the terminal phosphate of ATP to form a long-chain polyphosphate (polyP). In Mycobacterium avium (strain 104), this protein is Polyphosphate kinase.